A 472-amino-acid polypeptide reads, in one-letter code: Arabinose-proton symporter (472 aa).

Over 1–29 (MVTINTESALTPRSLRDTRRMNMFVSVAA) the chain is Cytoplasmic. The chain crosses the membrane as a helical span at residues 30-50 (AVAGLLFGLDIGVIAGALPFI). Over 51 to 63 (TDHFVLTSRLQEW) the chain is Periplasmic. Residues 64–84 (VVSSMMLGAAIGALFNGWLSF) traverse the membrane as a helical segment. The Cytoplasmic segment spans residues 85–91 (RLGRKYS). A helical membrane pass occupies residues 92–112 (LMAGAILFVLGSIGSAFATSV). Over 113–114 (EM) the chain is Periplasmic. A helical membrane pass occupies residues 115 to 135 (LIAARVVLGIAVGIASYTAPL). Residues 136-154 (YLSEMASENVRGKMISMYQ) lie on the Cytoplasmic side of the membrane. The chain crosses the membrane as a helical span at residues 155-175 (LMVTLGIVLAFLSDTAFSYSG). Over 176-178 (NWR) the chain is Periplasmic. The chain crosses the membrane as a helical span at residues 179–199 (AMLGVLALPAVLLIILVVFLP). Over 200–257 (NSPRWLAEKGRHIEAEEVLRMLRDTSEKAREELNEIRESLKLKQGGWALFKINRNVRR) the chain is Cytoplasmic. A helical transmembrane segment spans residues 258 to 278 (AVFLGMLLQAMQQFTGMNIIM). Topologically, residues 279–297 (YYAPRIFKMAGFTTTEQQM) are periplasmic. A helical transmembrane segment spans residues 298-318 (IATLVVGLTFMFATFIAVFTV). The Cytoplasmic segment spans residues 319–325 (DKAGRKP). A helical transmembrane segment spans residues 326-346 (ALKIGFSVMALGTLVLGYCLM). Over 347–361 (QFDNGTASSGLSWLS) the chain is Periplasmic. Residues 362 to 382 (VGMTMMCIAGYAMSAAPVVWI) form a helical membrane-spanning segment. Over 383–404 (LCSEIQPLKCRDFGITCSTTTN) the chain is Cytoplasmic. Transmembrane regions (helical) follow at residues 405–425 (WVSNMIIGATFLTLLDSIGAA) and 426–446 (GTFWLYTALNIAFVGITFWLI). Topologically, residues 447-472 (PETKNVTLEHIERKLMAGEKLRNIGV) are cytoplasmic.

The protein belongs to the major facilitator superfamily. Sugar transporter (TC 2.A.1.1) family.

It is found in the cell inner membrane. It catalyses the reaction L-arabinose(in) + H(+)(in) = L-arabinose(out) + H(+)(out). Functionally, uptake of L-arabinose across the cytoplasmic membrane with the concomitant transport of protons into the cell (symport system). This is Arabinose-proton symporter (araE) from Escherichia coli O157:H7.